Reading from the N-terminus, the 367-residue chain is Phosphoribosylaminoimidazole-succinocarboxamide synthase (367 aa).

Belongs to the SAICAR synthetase family.

It carries out the reaction 5-amino-1-(5-phospho-D-ribosyl)imidazole-4-carboxylate + L-aspartate + ATP = (2S)-2-[5-amino-1-(5-phospho-beta-D-ribosyl)imidazole-4-carboxamido]succinate + ADP + phosphate + 2 H(+). It functions in the pathway purine metabolism; IMP biosynthesis via de novo pathway; 5-amino-1-(5-phospho-D-ribosyl)imidazole-4-carboxamide from 5-amino-1-(5-phospho-D-ribosyl)imidazole-4-carboxylate: step 1/2. This Shewanella pealeana (strain ATCC 700345 / ANG-SQ1) protein is Phosphoribosylaminoimidazole-succinocarboxamide synthase.